Here is a 506-residue protein sequence, read N- to C-terminus: ATP synthase subunit alpha, mitochondrial (506 aa).

Residue 171–178 coordinates ATP; that stretch reads GDRQTGKT.

It belongs to the ATPase alpha/beta chains family. As to quaternary structure, F-type ATPases have 2 components, CF(1) - the catalytic core - and CF(0) - the membrane proton channel. CF(1) has five subunits: alpha(3), beta(3), gamma(1), delta(1), epsilon(1). CF(0) has three main subunits: a, b and c.

The protein resides in the mitochondrion. The protein localises to the mitochondrion inner membrane. Its function is as follows. Mitochondrial membrane ATP synthase (F(1)F(0) ATP synthase or Complex V) produces ATP from ADP in the presence of a proton gradient across the membrane which is generated by electron transport complexes of the respiratory chain. F-type ATPases consist of two structural domains, F(1) - containing the extramembraneous catalytic core, and F(0) - containing the membrane proton channel, linked together by a central stalk and a peripheral stalk. During catalysis, ATP synthesis in the catalytic domain of F(1) is coupled via a rotary mechanism of the central stalk subunits to proton translocation. Subunits alpha and beta form the catalytic core in F(1). Rotation of the central stalk against the surrounding alpha(3)beta(3) subunits leads to hydrolysis of ATP in three separate catalytic sites on the beta subunits. Subunit alpha does not bear the catalytic high-affinity ATP-binding sites. The protein is ATP synthase subunit alpha, mitochondrial (ATPA) of Beta vulgaris (Sugar beet).